Reading from the N-terminus, the 921-residue chain is Short transient receptor potential channel 3 (921 aa).

The disordered stretch occupies residues 1-73 (MSTKVRKCKE…PPFSHGPDLS (73 aa)). Residues 1–459 (MSTKVRKCKE…KILRSPFMKF (459 aa)) lie on the Cytoplasmic side of the membrane. A compositionally biased stretch (acidic residues) spans 19–31 (PEEEEDEGEDEGA). ANK repeat units lie at residues 111–140 (AEEE…TLNV), 146–175 (MGQN…LARI), 177–203 (DALL…FAAS), and 232–261 (PDIT…RIER). Glu158 contributes to the Ca(2+) binding site. The chain crosses the membrane as a helical span at residues 460–477 (VAHAASFIIFLGLLVFNA). Topologically, residues 478-508 (SDRFEGITTLPNITVTDYPKQIFRVKTTQFT) are extracellular. An N-linked (GlcNAc...) asparagine glycan is attached at Asn489. A helical transmembrane segment spans residues 509-527 (WTEMLIMVWVLGMMWSECK). Positions 525, 528, and 543 each coordinate Ca(2+). The Cytoplasmic segment spans residues 528–540 (ELWLEGPREYILQ). The helical transmembrane segment at 541–562 (LWNVLDFGMLSIFIAAFTARFL) threads the bilayer. At 563-606 (AFLQATKAQQYVDSYVQESDLSEVTLPPEIQYFTYARDKWLPSD) the chain is on the extracellular side. A helical transmembrane segment spans residues 607-630 (PQIISEGLYAIAVVLSFSRIAYIL). The Cytoplasmic segment spans residues 631–649 (PANESFGPLQISLGRTVKD). An ANK 5 repeat occupies 634-663 (ESFGPLQISLGRTVKDIFKFMVLFIMVFFA). The chain crosses the membrane as a helical span at residues 650–673 (IFKFMVLFIMVFFAFMIGMFILYS). At 674-713 (YYLGAKVNAAFTTVEESFKTLFWSIFGLSEVTSVVLKYDH) the chain is on the extracellular side. The chain crosses the membrane as a helical span at residues 714 to 739 (KFIENIGYVLYGIYNVTMVVVLLNML). Residues 740–921 (IAMINSSYQE…KLNPSMLRCE (182 aa)) are Cytoplasmic-facing. A binds to IP3R3 region spans residues 850–870 (QIMKRLIKRYVLKAQVDKEND). Ca(2+) is bound by residues Glu871, Glu874, Glu876, and Asp883.

This sequence belongs to the transient receptor (TC 1.A.4) family. STrpC subfamily. TRPC3 sub-subfamily. In terms of assembly, homotetramer. Interacts with ITPR1. Interacts with ITPR3. Interacts with MX1. Interacts with RNF24. Interacts with JPH2; the interaction is involved in maintaining Ca(2+) homeostasis in skeletal muscle and is mediated by JPH2 'Ser-165' phosphorylation. As to quaternary structure, interacts with isoform short of TRPC1. Expressed predominantly in brain and at much lower levels in ovary, colon, small intestine, lung, prostate, placenta and testis.

It localises to the cell membrane. The catalysed reaction is Ca(2+)(in) = Ca(2+)(out). Its activity is regulated as follows. Activated by diacylglycerol (DAG) in a membrane-delimited fashion, independently of protein kinase C. Activated by inositol 1,4,5-triphosphate receptors (ITPR) with bound IP3. May be activated by internal calcium store depletion. Inhibited by intracellular Ca(2+). Functionally, forms a receptor-activated non-selective calcium permeant cation channel. In terms of biological role, forms a receptor-activated non-selective calcium permeant cation channel. May be operated by a phosphatidylinositol second messenger system activated by receptor tyrosine kinases or G-protein coupled receptors. This is Short transient receptor potential channel 3 (TRPC3) from Homo sapiens (Human).